Here is an 882-residue protein sequence, read N- to C-terminus: Alanine--tRNA ligase (882 aa).

Zn(2+)-binding residues include histidine 570, histidine 574, cysteine 672, and histidine 676.

The protein belongs to the class-II aminoacyl-tRNA synthetase family. Zn(2+) serves as cofactor.

It is found in the cytoplasm. It carries out the reaction tRNA(Ala) + L-alanine + ATP = L-alanyl-tRNA(Ala) + AMP + diphosphate. Catalyzes the attachment of alanine to tRNA(Ala) in a two-step reaction: alanine is first activated by ATP to form Ala-AMP and then transferred to the acceptor end of tRNA(Ala). Also edits incorrectly charged Ser-tRNA(Ala) and Gly-tRNA(Ala) via its editing domain. The polypeptide is Alanine--tRNA ligase (Xanthomonas oryzae pv. oryzae (strain MAFF 311018)).